The chain runs to 196 residues: Small ribosomal subunit protein uS4c (196 aa).

Positions 89–169 constitute an S4 RNA-binding domain; the sequence is MRLDNIIFRL…LPKHLTIDTV (81 aa).

This sequence belongs to the universal ribosomal protein uS4 family. In terms of assembly, part of the 30S ribosomal subunit. Contacts protein S5. The interaction surface between S4 and S5 is involved in control of translational fidelity.

The protein localises to the plastid. It localises to the chloroplast. Its function is as follows. One of the primary rRNA binding proteins, it binds directly to 16S rRNA where it nucleates assembly of the body of the 30S subunit. In terms of biological role, with S5 and S12 plays an important role in translational accuracy. This chain is Small ribosomal subunit protein uS4c (rps4), found in Stipellula capensis (Cape rice grass).